The primary structure comprises 427 residues: Light-independent protochlorophyllide reductase subunit N (427 aa).

Positions 28, 53, and 114 each coordinate [4Fe-4S] cluster.

Belongs to the BchN/ChlN family. As to quaternary structure, protochlorophyllide reductase is composed of three subunits; BchL, BchN and BchB. Forms a heterotetramer of two BchB and two BchN subunits. It depends on [4Fe-4S] cluster as a cofactor.

The catalysed reaction is chlorophyllide a + oxidized 2[4Fe-4S]-[ferredoxin] + 2 ADP + 2 phosphate = protochlorophyllide a + reduced 2[4Fe-4S]-[ferredoxin] + 2 ATP + 2 H2O. Its pathway is porphyrin-containing compound metabolism; bacteriochlorophyll biosynthesis (light-independent). Component of the dark-operative protochlorophyllide reductase (DPOR) that uses Mg-ATP and reduced ferredoxin to reduce ring D of protochlorophyllide (Pchlide) to form chlorophyllide a (Chlide). This reaction is light-independent. The NB-protein (BchN-BchB) is the catalytic component of the complex. The sequence is that of Light-independent protochlorophyllide reductase subunit N from Dinoroseobacter shibae (strain DSM 16493 / NCIMB 14021 / DFL 12).